The following is a 117-amino-acid chain: Hainantoxin-XV-3 (117 aa).

The N-terminal stretch at 1–20 is a signal peptide; that stretch reads MKLCAVIIASLLVCVAVASS. Positions 20–55 are disordered; it reads SSDNQKEFAQEKEMTREETQSLGEHEKDDEVTGSEE. Positions 21 to 56 are excised as a propeptide; it reads SDNQKEFAQEKEMTREETQSLGEHEKDDEVTGSEER. Positions 23–55 are enriched in basic and acidic residues; it reads NQKEFAQEKEMTREETQSLGEHEKDDEVTGSEE. Disulfide bonds link Cys-58–Cys-72, Cys-65–Cys-78, Cys-69–Cys-115, and Cys-71–Cys-91.

It belongs to the neurotoxin 03 (Tx2) family. 02 subfamily. HNTX-XV sub-subfamily. Expressed by the venom gland.

The protein localises to the secreted. Putative ion channel inhibitor. This chain is Hainantoxin-XV-3, found in Cyriopagopus hainanus (Chinese bird spider).